The following is a 407-amino-acid chain: Argininosuccinate synthase (407 aa).

ATP contacts are provided by residues 13–21 (AYSGGLDTS) and A40. Positions 91 and 96 each coordinate L-citrulline. Position 121 (G121) interacts with ATP. The L-aspartate site is built by T123, N127, and D128. An L-citrulline-binding site is contributed by N127. Positions 131, 182, 191, 267, and 279 each coordinate L-citrulline.

The protein belongs to the argininosuccinate synthase family. Type 1 subfamily. In terms of assembly, homotetramer.

It is found in the cytoplasm. The enzyme catalyses L-citrulline + L-aspartate + ATP = 2-(N(omega)-L-arginino)succinate + AMP + diphosphate + H(+). It participates in amino-acid biosynthesis; L-arginine biosynthesis; L-arginine from L-ornithine and carbamoyl phosphate: step 2/3. This Rhizobium etli (strain ATCC 51251 / DSM 11541 / JCM 21823 / NBRC 15573 / CFN 42) protein is Argininosuccinate synthase.